The following is a 523-amino-acid chain: 2-isopropylmalate synthase (523 aa).

A Pyruvate carboxyltransferase domain is found at 5–267; it reads VIIFDTTLRD…HTNINHHEIW (263 aa). Mn(2+) is bound by residues Asp-14, His-202, His-204, and Asn-238. The regulatory domain stretch occupies residues 392–523; sequence RLDYFSVQSG…QNKENNKETV (132 aa).

This sequence belongs to the alpha-IPM synthase/homocitrate synthase family. LeuA type 1 subfamily. In terms of assembly, homodimer. It depends on Mn(2+) as a cofactor.

The protein resides in the cytoplasm. It carries out the reaction 3-methyl-2-oxobutanoate + acetyl-CoA + H2O = (2S)-2-isopropylmalate + CoA + H(+). It functions in the pathway amino-acid biosynthesis; L-leucine biosynthesis; L-leucine from 3-methyl-2-oxobutanoate: step 1/4. Catalyzes the condensation of the acetyl group of acetyl-CoA with 3-methyl-2-oxobutanoate (2-ketoisovalerate) to form 3-carboxy-3-hydroxy-4-methylpentanoate (2-isopropylmalate). The chain is 2-isopropylmalate synthase from Klebsiella pneumoniae (strain 342).